A 309-amino-acid polypeptide reads, in one-letter code: MKKLFILAGPTAVGKTDISIEVAKKIDGEIISADSMQIYKYMNIGSAKITKGEMQEIPHYLIDIIDPKENFNVSRYKNLAEKTIEDIYSRNKFPMLVGGTGLYINSLICNYDFTDAKVDVNYRNYLENLAKVQGREYVHSLLKDIDAVSYERLYPNDLKRVVRALEVHKLTGKTIGEFNSKDSLYDIPYKIYYFVLNMDRVKLYERINKRVDLMIEQGLIDEVKNLRSMGYTKDMQSMKGIGYKELIRYLEGDISLDEAVYLIKKGSRNYAKRQLTWFRKDERVIWVNKDEFTSNKEIVNYIINTLVTC.

Gly-9–Thr-16 lines the ATP pocket. Substrate is bound at residue Thr-11–Thr-16. An interaction with substrate tRNA region spans residues Asp-34–Gln-37.

Belongs to the IPP transferase family. As to quaternary structure, monomer. It depends on Mg(2+) as a cofactor.

It catalyses the reaction adenosine(37) in tRNA + dimethylallyl diphosphate = N(6)-dimethylallyladenosine(37) in tRNA + diphosphate. In terms of biological role, catalyzes the transfer of a dimethylallyl group onto the adenine at position 37 in tRNAs that read codons beginning with uridine, leading to the formation of N6-(dimethylallyl)adenosine (i(6)A). The chain is tRNA dimethylallyltransferase from Clostridium kluyveri (strain NBRC 12016).